The chain runs to 95 residues: Aspartyl/glutamyl-tRNA(Asn/Gln) amidotransferase subunit C (95 aa).

The protein belongs to the GatC family. In terms of assembly, heterotrimer of A, B and C subunits.

The catalysed reaction is L-glutamyl-tRNA(Gln) + L-glutamine + ATP + H2O = L-glutaminyl-tRNA(Gln) + L-glutamate + ADP + phosphate + H(+). It catalyses the reaction L-aspartyl-tRNA(Asn) + L-glutamine + ATP + H2O = L-asparaginyl-tRNA(Asn) + L-glutamate + ADP + phosphate + 2 H(+). Its function is as follows. Allows the formation of correctly charged Asn-tRNA(Asn) or Gln-tRNA(Gln) through the transamidation of misacylated Asp-tRNA(Asn) or Glu-tRNA(Gln) in organisms which lack either or both of asparaginyl-tRNA or glutaminyl-tRNA synthetases. The reaction takes place in the presence of glutamine and ATP through an activated phospho-Asp-tRNA(Asn) or phospho-Glu-tRNA(Gln). The polypeptide is Aspartyl/glutamyl-tRNA(Asn/Gln) amidotransferase subunit C (Brucella abortus (strain S19)).